The sequence spans 363 residues: Lovastatin nonaketide synthase, enoyl reductase component lovC (363 aa).

Residues serine 51–lysine 54, serine 174–threonine 177, serine 197–asparagine 200, tyrosine 215, leucine 262–asparagine 263, threonine 280, and leucine 351–serine 352 each bind NADP(+). The interval threonine 226–arginine 272 is lovB-binding.

Belongs to the zinc-containing alcohol dehydrogenase family. Each MAT domain from the lovB homodimer binds one lovC molecule to form the final active lovB-lovC megasynthase complex.

The enzyme catalyses holo-[lovastatin nonaketide synthase] + 9 malonyl-CoA + S-adenosyl-L-methionine + 11 NADPH + 19 H(+) = dihydromonacolin L-[lovastatin nonaketide synthase] + S-adenosyl-L-homocysteine + 9 CO2 + 11 NADP(+) + 9 CoA + 6 H2O. Its pathway is polyketide biosynthesis; lovastatin biosynthesis. Trans-enoyl reductase; part of the gene cluster that mediates the biosynthesis of lovastatin (also known as mevinolin, mevacor or monacolin K), a hypolipidemic inhibitor of (3S)-hydroxymethylglutaryl-coenzyme A (HMG-CoA) reductase (HMGR). The first step in the biosynthesis of lovastatin is the production of dihydromonacolin L acid (DML) by the lovastatin nonaketide synthase lovB and the trans-acting enoyl reductase lovC (called the lovB-lovC megasynthase complex) via condensation of one acetyl-CoA unit and 8 malonyl-CoA units. The formation of the LovB/C complex is essential for the integrity of the catalytic chamber to the complete total synthesis of DML acid. Dihydromonacolin L acid is released from lovB by the thioesterase lovG. Next, dihydromonacolin L acid is oxidized by the dihydromonacolin L monooxygenase lovA twice to form monacolin J acid. The 2-methylbutyrate moiety of lovastatin is synthesized by the lovastatin diketide synthase lovF via condensation of one acetyl-CoA unit and one malonyl-CoA unit. Finally, the covalent attachment of this moiety to monacolin J acid is catalyzed by the transesterase lovD to yield lovastatin. LovD has broad substrate specificity and can also convert monacolin J to simvastatin using alpha-dimethylbutanoyl-S-methyl-3-mercaptopropionate (DMB-S-MMP) as the thioester acyl donor, and can also catalyze the reverse reaction and function as hydrolase in vitro. LovD has much higher activity with LovF-bound 2-methylbutanoate than with free diketide substrates. In Aspergillus terreus, this protein is Lovastatin nonaketide synthase, enoyl reductase component lovC.